We begin with the raw amino-acid sequence, 111 residues long: Large ribosomal subunit protein uL24 (111 aa).

The disordered stretch occupies residues 85-111; sequence NTNDPRRKDIINRKASRQKEEQGGKAQ. Basic and acidic residues predominate over residues 88 to 111; that stretch reads DPRRKDIINRKASRQKEEQGGKAQ.

The protein belongs to the universal ribosomal protein uL24 family. As to quaternary structure, part of the 50S ribosomal subunit.

Functionally, one of two assembly initiator proteins, it binds directly to the 5'-end of the 23S rRNA, where it nucleates assembly of the 50S subunit. In terms of biological role, located at the polypeptide exit tunnel on the outside of the subunit. The protein is Large ribosomal subunit protein uL24 of Metallosphaera sedula (strain ATCC 51363 / DSM 5348 / JCM 9185 / NBRC 15509 / TH2).